Consider the following 115-residue polypeptide: Thionin-like protein 2 (115 aa).

The N-terminal stretch at 1–20 (MLVAVMIVMVIGNLLAQTAA) is a signal peptide.

It belongs to the plant thionin (TC 1.C.44) family. In terms of processing, is disulfide-linked.

Its subcellular location is the secreted. In terms of biological role, may be involved in plant defense. The sequence is that of Thionin-like protein 2 from Arabidopsis thaliana (Mouse-ear cress).